A 491-amino-acid polypeptide reads, in one-letter code: Probable folate-biopterin transporter 4 (491 aa).

6 helical membrane-spanning segments follow: residues 14–34, 52–72, 84–104, 112–132, 154–174, and 179–199; these read VAFLWLVCLIYFTQGFRSFVW, SQFVFSVAFFPWSIKPLYGII, TPYLVISTVLSLVPWLVLGLD, LYLMIFLTVQNLGSAMADVVI, VSWFAMAVGGVCGSLLGGYAL, and IETIFLLFTVLPALQLLSCAL. A disordered region spans residues 222 to 262; the sequence is KSLTSNDNYPDTSKSNTRRRKGQKKGKKGDSNGKSETQKKQ. Residues 224 to 236 are compositionally biased toward polar residues; it reads LTSNDNYPDTSKS. Positions 237 to 248 are enriched in basic residues; it reads NTRRRKGQKKGK. Residues 249–260 are compositionally biased toward basic and acidic residues; sequence KGDSNGKSETQK. 6 helical membrane passes run 294 to 314, 323 to 343, 356 to 376, 389 to 411, 437 to 457, and 461 to 481; these read MAWFFIAHITVPNLSTVMFYY, AAFLGTARVVGWLGLMFGTFI, SLLFAHIGLSVTILLDMVLVS, MVLFGSALGDAINQLKFMPFLIL, TVGSFMGAGLASLLGISSGSF, and FMGLAIQVFCTYIPVLFLFLI.

This sequence belongs to the major facilitator superfamily. Folate-biopterin transporter (TC 2.A.71) family.

It localises to the membrane. Functionally, could mediate folate transport. This chain is Probable folate-biopterin transporter 4, found in Arabidopsis thaliana (Mouse-ear cress).